The primary structure comprises 349 residues: Core protein VP7 (349 aa).

Residues Asn193 and Asn287 are each glycosylated (N-linked (GlcNAc...) asparagine; by host).

The protein belongs to the orbivirus VP7 family. In terms of assembly, homotrimer that assemble in a complex of 260 capsomers on an inner scaffold composed of VP3.

The protein localises to the virion. The VP7 protein is one of the five proteins (with VP1, VP3, VP4, and VP6) which form the inner capsid of the virus. This is Core protein VP7 (Segment-7) from Antilocapra americana (Pronghorn).